Here is a 227-residue protein sequence, read N- to C-terminus: Protein FAM3C (227 aa).

Residues 1–24 form the signal peptide; that stretch reads MRVAGAAKLVVAVAVFLLTFYVIS. Disulfide bonds link C58-C86 and C64-C221. The GG-type lectin domain maps to 67 to 225; sequence KHFAFKMASG…VEMEGCIPQK (159 aa).

This sequence belongs to the FAM3 family.

It localises to the secreted. The protein localises to the cytoplasmic vesicle. In terms of biological role, may be involved in retinal laminar formation. Promotes epithelial to mesenchymal transition. The chain is Protein FAM3C (FAM3C) from Bos taurus (Bovine).